The following is a 260-amino-acid chain: IVAGWSAYPRQLDFVRFREIADKVGAYLFVDMAHFAGLVATGLHPSPVPHAHVVTSTTHKTLAGPRGGIILSNDAEIAKKLNSAVFPGQQGGPLEHVIAGKAVAFKIAASAEFKERQQRTLAGSRILAQRLTQADVAAKGISVLTGGTDVHLVLVDLRHSELDGQQAEDLLAKVEITVNRNSVPFDPRPPMTTSGLRIGTPALATRGFSEEAFAEVAEIIAQTLIAGAEGNTGVLPELKARILELAAAHPLYPNLKKIGE.

An N6-(pyridoxal phosphate)lysine modification is found at Lys-60.

This sequence belongs to the SHMT family. Homodimer. Pyridoxal 5'-phosphate serves as cofactor.

Its subcellular location is the cytoplasm. The catalysed reaction is (6R)-5,10-methylene-5,6,7,8-tetrahydrofolate + glycine + H2O = (6S)-5,6,7,8-tetrahydrofolate + L-serine. It participates in one-carbon metabolism; tetrahydrofolate interconversion. Its pathway is amino-acid biosynthesis; glycine biosynthesis; glycine from L-serine: step 1/1. Catalyzes the reversible interconversion of serine and glycine with tetrahydrofolate (THF) serving as the one-carbon carrier. This reaction serves as the major source of one-carbon groups required for the biosynthesis of purines, thymidylate, methionine, and other important biomolecules. Also exhibits THF-independent aldolase activity toward beta-hydroxyamino acids, producing glycine and aldehydes, via a retro-aldol mechanism. In Corynebacterium sp. (strain P-1), this protein is Serine hydroxymethyltransferase.